A 381-amino-acid chain; its full sequence is Class E basic helix-loop-helix protein 22 (381 aa).

Disordered stretches follow at residues 30–94 (RLEA…GGGG), 135–154 (RGSV…DSDG), and 188–242 (HLHG…EQKA). Over residues 82 to 94 (GGGGGSAGSGGGG) the composition is skewed to gly residues. Over residues 198-225 (GGLGGGGGGGSSSGSSGGGGGSGSGSGG) the composition is skewed to gly residues. The bHLH domain occupies 242 to 296 (ALRLNINARERRRMHDLNDALDELRAVIPYAHSPSVRKLSKIATLLLAKNYILMQ).

As to quaternary structure, interacts with PRDM8. As to expression, brain-specific, with the highest expression in the cerebellum.

The protein resides in the nucleus. Functionally, inhibits DNA binding of TCF3/E47 homodimers and TCF3 (E47)/NEUROD1 heterodimers and acts as a strong repressor of Neurod1 and Myod-responsive genes, probably by heterodimerization with class a basic helix-loop-helix factors. Despite the presence of an intact basic domain, does not bind to DNA. In the brain, may function as an area-specific transcription factor that regulates the postmitotic acquisition of area identities and elucidate the genetic hierarchy between progenitors and postmitotic neurons driving neocortical arealization. May be required for the survival of a specific population of inhibitory neurons in the superficial laminae of the spinal cord dorsal horn that may regulate pruritis. Seems to play a crucial role in the retinogenesis, in the specification of amacrine and bipolar subtypes. Forms with PRDM8 a transcriptional repressor complex controlling genes involved in neural development and neuronal differentiation. The chain is Class E basic helix-loop-helix protein 22 (BHLHE22) from Homo sapiens (Human).